The chain runs to 92 residues: Small ribosomal subunit protein bS20 (92 aa).

Residues 1 to 23 form a disordered region; the sequence is MANTTSAKKATRKIARRTDVNKA.

Belongs to the bacterial ribosomal protein bS20 family.

Binds directly to 16S ribosomal RNA. This chain is Small ribosomal subunit protein bS20, found in Rhizobium etli (strain CIAT 652).